Here is a 96-residue protein sequence, read N- to C-terminus: Small ribosomal subunit protein bS18 (96 aa).

The span at 1–22 (MYKDIDSHQRDSRTDGHQDGFK) shows a compositional bias: basic and acidic residues. The disordered stretch occupies residues 1–25 (MYKDIDSHQRDSRTDGHQDGFKKNP).

Belongs to the bacterial ribosomal protein bS18 family. Part of the 30S ribosomal subunit. Forms a tight heterodimer with protein bS6.

Functionally, binds as a heterodimer with protein bS6 to the central domain of the 16S rRNA, where it helps stabilize the platform of the 30S subunit. In Borrelia duttonii (strain Ly), this protein is Small ribosomal subunit protein bS18.